A 484-amino-acid chain; its full sequence is Threonine synthase-like 2 (484 aa).

An N6-(pyridoxal phosphate)lysine modification is found at K113.

It belongs to the threonine synthase family. Pyridoxal 5'-phosphate is required as a cofactor.

It localises to the secreted. In terms of biological role, acts as a catabolic phospho-lyase on both gamma- and beta-phosphorylated substrates. Degrades O-phospho-threonine (PThr) to alpha-ketobutyrate, ammonia and phosphate. Its function is as follows. Potent inducer of osteoblastic production of IL6. May act to exacerbate inflammation and/or bone turnover under inflammatory conditions. The polypeptide is Threonine synthase-like 2 (THNSL2) (Homo sapiens (Human)).